Reading from the N-terminus, the 323-residue chain is Octaprenyl diphosphate synthase (323 aa).

Residues K45, R48, and H77 each coordinate isopentenyl diphosphate. Mg(2+) is bound by residues D84 and D88. R93 contacts an all-trans-polyprenyl diphosphate. R94 is a binding site for isopentenyl diphosphate. An all-trans-polyprenyl diphosphate-binding residues include K170, T171, and Q208.

This sequence belongs to the FPP/GGPP synthase family. Mg(2+) is required as a cofactor.

It carries out the reaction 5 isopentenyl diphosphate + (2E,6E)-farnesyl diphosphate = all-trans-octaprenyl diphosphate + 5 diphosphate. Supplies octaprenyl diphosphate, the precursor for the side chain of the isoprenoid quinones ubiquinone and menaquinone. The protein is Octaprenyl diphosphate synthase (ispB) of Escherichia coli (strain K12).